We begin with the raw amino-acid sequence, 419 residues long: MMLRTCKDVTMRGERVVVRVDFNVPMRDGMVQDDTRVTAAVPTLRYIIEQGPRHVVLISHLGDPTRDADKAEGNAKKDGCPFDRHAFINGKHRLKPVADCLAKKLGVPVHFAPSCVGQREFIEGLPDGSVVLLENVRFHPEETSGDAKVQEQFARELAQYGDIFVNDAFGTAHREHASTVVLPRLMRRRVAGLLIEREVRYLEPMVCNPKVPMVAVVGGAKVSSKIAVLESLLRTSTALIIGGGMAYTFLKAQGVGVGTSLVEDDFIDTARMLLQKAQSGGVSVVLPVDHVCASTFCADAQPVAVDDVHIPMHLMGMDVGPRTLEQYRAHLKGVSSVLWNGPVGVFEFDAFAHGTRVLAQLIAEATDAGATSVVGGGDSIAAVSKFGLASRMSHVSTGGGASLKLFEGKVLPGISCLET.

Substrate-binding positions include 21 to 23 (DFN), R36, 60 to 63 (HLGD), R137, and R174. ATP contacts are provided by residues K225, G316, E347, and 376–379 (GGDS).

Belongs to the phosphoglycerate kinase family. As to quaternary structure, monomer.

The protein resides in the cytoplasm. It carries out the reaction (2R)-3-phosphoglycerate + ATP = (2R)-3-phospho-glyceroyl phosphate + ADP. Its pathway is carbohydrate degradation; glycolysis; pyruvate from D-glyceraldehyde 3-phosphate: step 2/5. The sequence is that of Phosphoglycerate kinase (pgk) from Treponema pallidum (strain Nichols).